The sequence spans 320 residues: Protease HtpX homolog (320 aa).

2 consecutive transmembrane segments (helical) span residues 6–26 (TAML…LIGG) and 28–48 (AGMM…YWNS). Residue H130 participates in Zn(2+) binding. E131 is a catalytic residue. Residue H134 participates in Zn(2+) binding. 2 helical membrane-spanning segments follow: residues 145-165 (ITAT…FFGG) and 173-193 (PLGF…AMLV). E202 serves as a coordination point for Zn(2+). Residues 281–320 (GGMNVSTPPVRAANPSRKSRSVPDTGLGRGGSQPPKGPWS) are disordered.

This sequence belongs to the peptidase M48B family. Zn(2+) serves as cofactor.

It localises to the cell inner membrane. This Rhizobium leguminosarum bv. trifolii (strain WSM2304) protein is Protease HtpX homolog.